Reading from the N-terminus, the 262-residue chain is tRNA pseudouridine synthase A (262 aa).

Catalysis depends on Asp-55, which acts as the Nucleophile. Tyr-116 provides a ligand contact to substrate.

This sequence belongs to the tRNA pseudouridine synthase TruA family. As to quaternary structure, homodimer.

It catalyses the reaction uridine(38/39/40) in tRNA = pseudouridine(38/39/40) in tRNA. Formation of pseudouridine at positions 38, 39 and 40 in the anticodon stem and loop of transfer RNAs. The polypeptide is tRNA pseudouridine synthase A (Bdellovibrio bacteriovorus (strain ATCC 15356 / DSM 50701 / NCIMB 9529 / HD100)).